A 120-amino-acid chain; its full sequence is Large ribosomal subunit protein uL29A (120 aa).

Residues Ser13 and Ser50 each carry the phosphoserine modification.

Belongs to the universal ribosomal protein uL29 family. In terms of assembly, component of the large ribosomal subunit (LSU). Mature yeast ribosomes consist of a small (40S) and a large (60S) subunit. The 40S small subunit contains 1 molecule of ribosomal RNA (18S rRNA) and 33 different proteins (encoded by 57 genes). The large 60S subunit contains 3 rRNA molecules (25S, 5.8S and 5S rRNA) and 46 different proteins (encoded by 81 genes). uL29 is associated with the polypeptide exit tunnel.

The protein localises to the cytoplasm. Functionally, component of the ribosome, a large ribonucleoprotein complex responsible for the synthesis of proteins in the cell. The small ribosomal subunit (SSU) binds messenger RNAs (mRNAs) and translates the encoded message by selecting cognate aminoacyl-transfer RNA (tRNA) molecules. The large subunit (LSU) contains the ribosomal catalytic site termed the peptidyl transferase center (PTC), which catalyzes the formation of peptide bonds, thereby polymerizing the amino acids delivered by tRNAs into a polypeptide chain. The nascent polypeptides leave the ribosome through a tunnel in the LSU and interact with protein factors that function in enzymatic processing, targeting, and the membrane insertion of nascent chains at the exit of the ribosomal tunnel. This chain is Large ribosomal subunit protein uL29A, found in Saccharomyces cerevisiae (strain ATCC 204508 / S288c) (Baker's yeast).